We begin with the raw amino-acid sequence, 354 residues long: UDP-3-O-acylglucosamine N-acyltransferase (354 aa).

H257 serves as the catalytic Proton acceptor.

Belongs to the transferase hexapeptide repeat family. LpxD subfamily. As to quaternary structure, homotrimer.

It carries out the reaction a UDP-3-O-[(3R)-3-hydroxyacyl]-alpha-D-glucosamine + a (3R)-hydroxyacyl-[ACP] = a UDP-2-N,3-O-bis[(3R)-3-hydroxyacyl]-alpha-D-glucosamine + holo-[ACP] + H(+). Its pathway is bacterial outer membrane biogenesis; LPS lipid A biosynthesis. Its function is as follows. Catalyzes the N-acylation of UDP-3-O-acylglucosamine using 3-hydroxyacyl-ACP as the acyl donor. Is involved in the biosynthesis of lipid A, a phosphorylated glycolipid that anchors the lipopolysaccharide to the outer membrane of the cell. This chain is UDP-3-O-acylglucosamine N-acyltransferase, found in Rhizobium johnstonii (strain DSM 114642 / LMG 32736 / 3841) (Rhizobium leguminosarum bv. viciae).